Consider the following 344-residue polypeptide: tRNA(Ile)-lysidine synthase (344 aa).

Position 35 to 40 (35 to 40 (SGGPDS)) interacts with ATP.

Belongs to the tRNA(Ile)-lysidine synthase family.

It is found in the cytoplasm. It catalyses the reaction cytidine(34) in tRNA(Ile2) + L-lysine + ATP = lysidine(34) in tRNA(Ile2) + AMP + diphosphate + H(+). In terms of biological role, ligates lysine onto the cytidine present at position 34 of the AUA codon-specific tRNA(Ile) that contains the anticodon CAU, in an ATP-dependent manner. Cytidine is converted to lysidine, thus changing the amino acid specificity of the tRNA from methionine to isoleucine. This chain is tRNA(Ile)-lysidine synthase, found in Methylobacterium sp. (strain 4-46).